A 424-amino-acid chain; its full sequence is D-inositol 3-phosphate glycosyltransferase (424 aa).

Histidine 20 contacts 1D-myo-inositol 3-phosphate. UDP-N-acetyl-alpha-D-glucosamine-binding positions include 26-27 and glycine 34; that span reads QP. 1D-myo-inositol 3-phosphate contacts are provided by residues 31–36, lysine 89, tyrosine 122, threonine 146, and arginine 166; that span reads DAGGMN. 3 residues coordinate UDP-N-acetyl-alpha-D-glucosamine: arginine 240, lysine 245, and methionine 306. Mg(2+) contacts are provided by tyrosine 315, arginine 316, and alanine 318. Positions 328 and 336 each coordinate UDP-N-acetyl-alpha-D-glucosamine. Residue threonine 342 coordinates Mg(2+).

It belongs to the glycosyltransferase group 1 family. MshA subfamily. In terms of assembly, homodimer.

The catalysed reaction is 1D-myo-inositol 3-phosphate + UDP-N-acetyl-alpha-D-glucosamine = 1D-myo-inositol 2-acetamido-2-deoxy-alpha-D-glucopyranoside 3-phosphate + UDP + H(+). Catalyzes the transfer of a N-acetyl-glucosamine moiety to 1D-myo-inositol 3-phosphate to produce 1D-myo-inositol 2-acetamido-2-deoxy-glucopyranoside 3-phosphate in the mycothiol biosynthesis pathway. This Kribbella flavida (strain DSM 17836 / JCM 10339 / NBRC 14399) protein is D-inositol 3-phosphate glycosyltransferase.